Reading from the N-terminus, the 146-residue chain is Large ribosomal subunit protein uL11 (146 aa).

It belongs to the universal ribosomal protein uL11 family. In terms of assembly, part of the ribosomal stalk of the 50S ribosomal subunit. Interacts with L10 and the large rRNA to form the base of the stalk. L10 forms an elongated spine to which L12 dimers bind in a sequential fashion forming a multimeric L10(L12)X complex. Post-translationally, one or more lysine residues are methylated.

Functionally, forms part of the ribosomal stalk which helps the ribosome interact with GTP-bound translation factors. This Blochmanniella floridana protein is Large ribosomal subunit protein uL11.